Here is a 605-residue protein sequence, read N- to C-terminus: Elongation factor 4 (605 aa).

Residues 4–181 (NKIKTFSIIA…AIVEYVPSPL (178 aa)) enclose the tr-type G domain. GTP contacts are provided by residues 16–21 (DHGKST) and 128–131 (NKVD).

Belongs to the TRAFAC class translation factor GTPase superfamily. Classic translation factor GTPase family. LepA subfamily.

The protein resides in the cell membrane. It carries out the reaction GTP + H2O = GDP + phosphate + H(+). Functionally, required for accurate and efficient protein synthesis under certain stress conditions. May act as a fidelity factor of the translation reaction, by catalyzing a one-codon backward translocation of tRNAs on improperly translocated ribosomes. Back-translocation proceeds from a post-translocation (POST) complex to a pre-translocation (PRE) complex, thus giving elongation factor G a second chance to translocate the tRNAs correctly. Binds to ribosomes in a GTP-dependent manner. This is Elongation factor 4 from Mycoplasmopsis synoviae (strain 53) (Mycoplasma synoviae).